The primary structure comprises 318 residues: L-malyl-CoA/beta-methylmalyl-CoA lyase (318 aa).

Phe-19, Arg-24, Lys-30, and Arg-76 together coordinate substrate. The Mg(2+) site is built by Glu-141 and Asp-168. Residues 167–168 (AD) and 251–252 (IH) each bind substrate.

It belongs to the HpcH/HpaI aldolase family. In terms of assembly, homohexamer. Dimer of trimers. Mg(2+) is required as a cofactor. Requires Mn(2+) as cofactor.

The enzyme catalyses (S)-malyl-CoA = glyoxylate + acetyl-CoA. The catalysed reaction is (2R,3S)-beta-methylmalyl-CoA = propanoyl-CoA + glyoxylate. Its activity is regulated as follows. In vitro inhibited by EDTA. Its function is as follows. Involved in the ethylmalonyl-CoA pathway for acetate assimilation. Catalyzes the reversible condensation of glyoxylate and acetyl-CoA to L-malyl-CoA and the reversible condensation of glyoxylate and propionyl-CoA to beta-methylmalyl-CoA. The sequence is that of L-malyl-CoA/beta-methylmalyl-CoA lyase from Rhodobacter capsulatus (Rhodopseudomonas capsulata).